The sequence spans 946 residues: Glycine dehydrogenase (decarboxylating) (946 aa).

At lysine 700 the chain carries N6-(pyridoxal phosphate)lysine.

Belongs to the GcvP family. The glycine cleavage system is composed of four proteins: P, T, L and H. It depends on pyridoxal 5'-phosphate as a cofactor.

It carries out the reaction N(6)-[(R)-lipoyl]-L-lysyl-[glycine-cleavage complex H protein] + glycine + H(+) = N(6)-[(R)-S(8)-aminomethyldihydrolipoyl]-L-lysyl-[glycine-cleavage complex H protein] + CO2. Functionally, the glycine cleavage system catalyzes the degradation of glycine. The P protein binds the alpha-amino group of glycine through its pyridoxal phosphate cofactor; CO(2) is released and the remaining methylamine moiety is then transferred to the lipoamide cofactor of the H protein. The protein is Glycine dehydrogenase (decarboxylating) of Pseudomonas fluorescens (strain SBW25).